A 445-amino-acid polypeptide reads, in one-letter code: DNA primase DnaG (445 aa).

Residues 166-252 (DAIVVVEGRS…SVEDLSRSEV (87 aa)) form the Toprim domain. Positions 172, 214, and 216 each coordinate Mg(2+). Residues 276–355 (EEMSQAGEST…NGDGPTIPSL (80 aa)) form a disordered region. A compositionally biased stretch (low complexity) spans 284 to 298 (STTADGGAVAAATSD). Polar residues predominate over residues 303 to 313 (NQPSPSSQTGS). The span at 324–337 (SVVDNSNATAVADA) shows a compositional bias: low complexity.

Belongs to the archaeal DnaG primase family. As to quaternary structure, forms a ternary complex with MCM helicase and DNA. The cofactor is Mg(2+).

It carries out the reaction ssDNA + n NTP = ssDNA/pppN(pN)n-1 hybrid + (n-1) diphosphate.. Functionally, RNA polymerase that catalyzes the synthesis of short RNA molecules used as primers for DNA polymerase during DNA replication. This chain is DNA primase DnaG, found in Haloarcula marismortui (strain ATCC 43049 / DSM 3752 / JCM 8966 / VKM B-1809) (Halobacterium marismortui).